The primary structure comprises 260 residues: 3-methyl-2-oxobutanoate hydroxymethyltransferase (260 aa).

Mg(2+) is bound by residues aspartate 42 and aspartate 81. 3-methyl-2-oxobutanoate-binding positions include 42-43, aspartate 81, and lysine 109; that span reads DS. Glutamate 111 is a Mg(2+) binding site. Catalysis depends on glutamate 178, which acts as the Proton acceptor.

Belongs to the PanB family. In terms of assembly, homodecamer; pentamer of dimers. It depends on Mg(2+) as a cofactor.

It is found in the cytoplasm. The enzyme catalyses 3-methyl-2-oxobutanoate + (6R)-5,10-methylene-5,6,7,8-tetrahydrofolate + H2O = 2-dehydropantoate + (6S)-5,6,7,8-tetrahydrofolate. Its pathway is cofactor biosynthesis; (R)-pantothenate biosynthesis; (R)-pantoate from 3-methyl-2-oxobutanoate: step 1/2. Its function is as follows. Catalyzes the reversible reaction in which hydroxymethyl group from 5,10-methylenetetrahydrofolate is transferred onto alpha-ketoisovalerate to form ketopantoate. This chain is 3-methyl-2-oxobutanoate hydroxymethyltransferase, found in Vesicomyosocius okutanii subsp. Calyptogena okutanii (strain HA).